Reading from the N-terminus, the 761-residue chain is Putative pentatricopeptide repeat-containing protein At2g02150 (761 aa).

PPR repeat units follow at residues 141–175, 191–225, 226–260, 261–295, 296–330, 331–365, 366–400, 401–435, 436–470, 471–505, 506–540, 541–575, 576–606, 612–646, 647–681, 682–716, and 717–751; these read SVES…KADC, GFGV…RVFP, KTRS…GARP, TVFT…GLVP, DTVT…CCEP, DVIT…GLKP, NVVS…GLVP, NEYT…GVEW, NVVT…GVIP, NLAS…GIKP, DLLL…GIKA, NSLI…DIEV, TVVT…ISND, NAAI…GLVP, DRTA…GMKL, DLLA…GIHP, and DEVL…QLLT.

This sequence belongs to the PPR family. P subfamily.

The chain is Putative pentatricopeptide repeat-containing protein At2g02150 from Arabidopsis thaliana (Mouse-ear cress).